The sequence spans 147 residues: Putative toxin MJ0142 (147 aa).

This sequence belongs to the UPF0332 family.

Functionally, putative toxin component of a putative type VII toxin-antitoxin (TA) system. Its cognate antitoxin might be MJ0141. In Methanocaldococcus jannaschii (strain ATCC 43067 / DSM 2661 / JAL-1 / JCM 10045 / NBRC 100440) (Methanococcus jannaschii), this protein is Putative toxin MJ0142.